The primary structure comprises 96 residues: NADH-ubiquinone oxidoreductase chain 4L (96 aa).

Transmembrane regions (helical) follow at residues 1 to 21 (MPTT…SLQR), 27 to 47 (LLLT…LWAL), and 57 to 77 (APLI…SLMI).

It belongs to the complex I subunit 4L family.

It is found in the mitochondrion membrane. It carries out the reaction a ubiquinone + NADH + 5 H(+)(in) = a ubiquinol + NAD(+) + 4 H(+)(out). In terms of biological role, core subunit of the mitochondrial membrane respiratory chain NADH dehydrogenase (Complex I) which catalyzes electron transfer from NADH through the respiratory chain, using ubiquinone as an electron acceptor. Part of the enzyme membrane arm which is embedded in the lipid bilayer and involved in proton translocation. The sequence is that of NADH-ubiquinone oxidoreductase chain 4L (MT-ND4L) from Petromyzon marinus (Sea lamprey).